A 343-amino-acid polypeptide reads, in one-letter code: Methylthioribose-1-phosphate isomerase (343 aa).

Residues 48 to 50, Arg88, and Gln193 contribute to the substrate site; that span reads RGA. The Proton donor role is filled by Asp234. Substrate is bound at residue 244-245; that stretch reads NK.

The protein belongs to the eIF-2B alpha/beta/delta subunits family. MtnA subfamily.

It catalyses the reaction 5-(methylsulfanyl)-alpha-D-ribose 1-phosphate = 5-(methylsulfanyl)-D-ribulose 1-phosphate. It participates in amino-acid biosynthesis; L-methionine biosynthesis via salvage pathway; L-methionine from S-methyl-5-thio-alpha-D-ribose 1-phosphate: step 1/6. Functionally, catalyzes the interconversion of methylthioribose-1-phosphate (MTR-1-P) into methylthioribulose-1-phosphate (MTRu-1-P). The protein is Methylthioribose-1-phosphate isomerase of Thermotoga petrophila (strain ATCC BAA-488 / DSM 13995 / JCM 10881 / RKU-1).